We begin with the raw amino-acid sequence, 187 residues long: Large ribosomal subunit protein uL22A (187 aa).

Belongs to the universal ribosomal protein uL22 family. As to quaternary structure, component of the large ribosomal subunit (LSU). Mature yeast ribosomes consist of a small (40S) and a large (60S) subunit. The 40S small subunit contains 1 molecule of ribosomal RNA (18S rRNA) and at least 33 different proteins. The large 60S subunit contains 3 rRNA molecules (25S, 5.8S and 5S rRNA) and at least 46 different proteins. uL22 is associated with the polypeptide exit tunnel.

The protein localises to the cytoplasm. Component of the ribosome, a large ribonucleoprotein complex responsible for the synthesis of proteins in the cell. The small ribosomal subunit (SSU) binds messenger RNAs (mRNAs) and translates the encoded message by selecting cognate aminoacyl-transfer RNA (tRNA) molecules. The large subunit (LSU) contains the ribosomal catalytic site termed the peptidyl transferase center (PTC), which catalyzes the formation of peptide bonds, thereby polymerizing the amino acids delivered by tRNAs into a polypeptide chain. The nascent polypeptides leave the ribosome through a tunnel in the LSU and interact with protein factors that function in enzymatic processing, targeting, and the membrane insertion of nascent chains at the exit of the ribosomal tunnel. In Schizosaccharomyces pombe (strain 972 / ATCC 24843) (Fission yeast), this protein is Large ribosomal subunit protein uL22A (rpl1701).